A 283-amino-acid chain; its full sequence is MMTHWPSPAKLNLFLYITGQRADGYHTLQTLFQFLDYGDTLHIEPRHDGEIHLLTPVTGVENEDNLIVRAARLLMKVASESGRLPAGSGADISIEKRLPMGGGLGGGSSNAATVLVALNHLWQCGLSIDELATLGLTLGADVPVFVRGHAAFAEGVGEILTPVNPPEKWYLVAHPGVSIPTPVIFKDPQLPRNTPKRSIDTLLKCEFSNDCEVIARKRFREVDAALSWLLEYAPSRLTGTGACVFAEFDTESCARQVLEQAPEWLNAFVAKGVNLSPLHRELL.

K10 is a catalytic residue. Residue 99 to 109 (PMGGGLGGGSS) coordinates ATP. D141 is a catalytic residue.

It belongs to the GHMP kinase family. IspE subfamily. As to quaternary structure, homodimer.

The catalysed reaction is 4-CDP-2-C-methyl-D-erythritol + ATP = 4-CDP-2-C-methyl-D-erythritol 2-phosphate + ADP + H(+). It participates in isoprenoid biosynthesis; isopentenyl diphosphate biosynthesis via DXP pathway; isopentenyl diphosphate from 1-deoxy-D-xylulose 5-phosphate: step 3/6. Functionally, catalyzes the phosphorylation of the position 2 hydroxy group of 4-diphosphocytidyl-2C-methyl-D-erythritol. The polypeptide is 4-diphosphocytidyl-2-C-methyl-D-erythritol kinase (Salmonella typhi).